The primary structure comprises 212 residues: Uridine kinase (212 aa).

Residue 13-20 (GGSGSGKT) participates in ATP binding.

Belongs to the uridine kinase family.

The protein localises to the cytoplasm. The enzyme catalyses uridine + ATP = UMP + ADP + H(+). It carries out the reaction cytidine + ATP = CMP + ADP + H(+). It functions in the pathway pyrimidine metabolism; CTP biosynthesis via salvage pathway; CTP from cytidine: step 1/3. The protein operates within pyrimidine metabolism; UMP biosynthesis via salvage pathway; UMP from uridine: step 1/1. The sequence is that of Uridine kinase from Bacillus thuringiensis (strain Al Hakam).